Consider the following 179-residue polypeptide: Fucolectin-4 (179 aa).

The first 23 residues, 1-23 (MEVKTIMLLFQILAISTLKQGSA), serve as a signal peptide directing secretion. The tract at residues 31–179 (EENVALRGRA…VEVNALLPVN (149 aa)) is F5/8 type C-like. Positions 58, 61, 63, and 72 each coordinate Ca(2+). 3 disulfide bridges follow: Cys-73-Cys-168, Cys-104-Cys-105, and Cys-130-Cys-146. Residues His-75 and Arg-101 each coordinate alpha-L-fucose. The Cell attachment site motif lies at 101–103 (RGD). Arg-108 lines the alpha-L-fucose pocket. Ca(2+)-binding residues include Cys-168 and Glu-169.

The protein belongs to the fucolectin family. In terms of assembly, homotrimer. Gill mucous cells.

It is found in the secreted. Functionally, acts as a defensive agent. Recognizes blood group fucosylated oligosaccharides including A, B, H and Lewis B-type antigens. Does not recognize Lewis A antigen and has low affinity for monovalent haptens. This chain is Fucolectin-4, found in Anguilla japonica (Japanese eel).